We begin with the raw amino-acid sequence, 469 residues long: Biotin synthase (469 aa).

Residues 51–278 (MTVKVNYLVN…DKEIRMAGGR (228 aa)) form the Radical SAM core domain. [4Fe-4S] cluster-binding residues include cysteine 66, cysteine 70, and cysteine 73. 4 residues coordinate [2Fe-2S] cluster: cysteine 110, cysteine 143, cysteine 203, and arginine 273. Residues 326–469 (AGPDPSRDRH…GAGTSVAPNA (144 aa)) form a disordered region. Composition is skewed to low complexity over residues 363–384 (GSAA…APAD) and 405–428 (AGGP…MSPA).

This sequence belongs to the radical SAM superfamily. Biotin synthase family. As to quaternary structure, homodimer. [4Fe-4S] cluster is required as a cofactor. Requires [2Fe-2S] cluster as cofactor.

The catalysed reaction is (4R,5S)-dethiobiotin + (sulfur carrier)-SH + 2 reduced [2Fe-2S]-[ferredoxin] + 2 S-adenosyl-L-methionine = (sulfur carrier)-H + biotin + 2 5'-deoxyadenosine + 2 L-methionine + 2 oxidized [2Fe-2S]-[ferredoxin]. The protein operates within cofactor biosynthesis; biotin biosynthesis; biotin from 7,8-diaminononanoate: step 2/2. In terms of biological role, catalyzes the conversion of dethiobiotin (DTB) to biotin by the insertion of a sulfur atom into dethiobiotin via a radical-based mechanism. The protein is Biotin synthase of Kocuria rhizophila (strain ATCC 9341 / DSM 348 / NBRC 103217 / DC2201).